Here is a 236-residue protein sequence, read N- to C-terminus: Virion protein US10 homolog (236 aa).

Residues 1–32 (MDGAYGHVHNGSPMAVDGEESGAGTGTGAGAD) are disordered. Positions 21 to 31 (SGAGTGTGAGA) are enriched in gly residues. The segment at 138-150 (CAYWCCLGHAFAC) is a zinc-finger region.

This sequence belongs to the herpesviridae US10 family. Phosphorylated.

The protein localises to the virion tegument. It localises to the host nucleus matrix. The protein is Virion protein US10 homolog (IR5) of Equine herpesvirus 1 (strain Kentucky A) (EHV-1).